Here is a 534-residue protein sequence, read N- to C-terminus: ATP synthase subunit alpha 2 (534 aa).

Residue 175 to 182 (GDRQTGKT) participates in ATP binding. The disordered stretch occupies residues 506 to 534 (FQPAPEPETAPKTKTDIKPKPKAAGGESS). Positions 514–524 (TAPKTKTDIKP) are enriched in basic and acidic residues.

The protein belongs to the ATPase alpha/beta chains family. In terms of assembly, F-type ATPases have 2 components, CF(1) - the catalytic core - and CF(0) - the membrane proton channel. CF(1) has five subunits: alpha(3), beta(3), gamma(1), delta(1), epsilon(1). CF(0) has three main subunits: a(1), b(2) and c(9-12). The alpha and beta chains form an alternating ring which encloses part of the gamma chain. CF(1) is attached to CF(0) by a central stalk formed by the gamma and epsilon chains, while a peripheral stalk is formed by the delta and b chains.

It localises to the cell inner membrane. It carries out the reaction ATP + H2O + 4 H(+)(in) = ADP + phosphate + 5 H(+)(out). Functionally, produces ATP from ADP in the presence of a proton gradient across the membrane. The alpha chain is a regulatory subunit. The polypeptide is ATP synthase subunit alpha 2 (Albidiferax ferrireducens (strain ATCC BAA-621 / DSM 15236 / T118) (Rhodoferax ferrireducens)).